The primary structure comprises 201 residues: Small ribosomal subunit protein uS4 (201 aa).

The S4 RNA-binding domain occupies 91 to 154 (SRLDNVIYRA…QKMEWFEEAQ (64 aa)).

This sequence belongs to the universal ribosomal protein uS4 family. Part of the 30S ribosomal subunit. Contacts protein S5. The interaction surface between S4 and S5 is involved in control of translational fidelity.

Its function is as follows. One of the primary rRNA binding proteins, it binds directly to 16S rRNA where it nucleates assembly of the body of the 30S subunit. With S5 and S12 plays an important role in translational accuracy. The protein is Small ribosomal subunit protein uS4 of Corynebacterium aurimucosum (strain ATCC 700975 / DSM 44827 / CIP 107346 / CN-1) (Corynebacterium nigricans).